A 792-amino-acid chain; its full sequence is Receptor-like protein 54 (792 aa).

The first 21 residues, methionine 1–serine 21, serve as a signal peptide directing secretion. Over aspartate 22 to lysine 758 the chain is Extracellular. 2 N-linked (GlcNAc...) asparagine glycosylation sites follow: asparagine 68 and asparagine 107. LRR repeat units follow at residues glutamine 114 to arginine 137, threonine 139 to leucine 162, serine 163 to leucine 187, glutamate 189 to methionine 209, phenylalanine 211 to alanine 233, serine 235 to leucine 258, alanine 259 to phenylalanine 282, lysine 283 to serine 302, glutamate 303 to aspartate 324, leucine 325 to leucine 349, serine 351 to asparagine 374, and serine 375 to asparagine 399. Residue asparagine 161 is glycosylated (N-linked (GlcNAc...) asparagine). Asparagine 230 is a glycosylation site (N-linked (GlcNAc...) asparagine). 2 N-linked (GlcNAc...) asparagine glycosylation sites follow: asparagine 304 and asparagine 314. Asparagine 356 and asparagine 374 each carry an N-linked (GlcNAc...) asparagine glycan. The LRR 13; degenerate repeat unit spans residues isoleucine 400–lysine 418. LRR repeat units lie at residues arginine 419 to valine 443, serine 444 to leucine 470, aspartate 472 to cysteine 489, and threonine 490 to arginine 515. Asparagine 431, asparagine 442, asparagine 454, asparagine 488, and asparagine 503 each carry an N-linked (GlcNAc...) asparagine glycan. Residues leucine 516–serine 536 form an LRR 18; degenerate repeat. LRR repeat units lie at residues phenylalanine 539–asparagine 563, aspartate 614–leucine 637, lysine 638–leucine 661, lysine 662–leucine 685, and phenylalanine 687–glycine 709. 2 N-linked (GlcNAc...) asparagine glycosylation sites follow: asparagine 553 and asparagine 563. Asparagine 647 carries an N-linked (GlcNAc...) asparagine glycan. N-linked (GlcNAc...) asparagine glycosylation is present at asparagine 692. Residues alanine 759–alanine 779 traverse the membrane as a helical segment. Residues arginine 780–leucine 792 are Cytoplasmic-facing.

It belongs to the RLP family.

The protein resides in the cell membrane. This Arabidopsis thaliana (Mouse-ear cress) protein is Receptor-like protein 54.